The primary structure comprises 155 residues: Small ribosomal subunit protein uS15 (155 aa).

Positions 1–10 (MARMHTRRRG) are enriched in basic residues. The interval 1 to 66 (MARMHTRRRG…EGVQGTPVPD (66 aa)) is disordered. Positions 21–33 (EPPEWSDVDEDAI) are enriched in acidic residues. The span at 34-45 (EERVVELAEQGH) shows a compositional bias: basic and acidic residues.

Belongs to the universal ribosomal protein uS15 family. As to quaternary structure, part of the 30S ribosomal subunit.

The polypeptide is Small ribosomal subunit protein uS15 (Halobacterium salinarum (strain ATCC 700922 / JCM 11081 / NRC-1) (Halobacterium halobium)).